The following is a 94-amino-acid chain: Putative pterin-4-alpha-carbinolamine dehydratase (94 aa).

It belongs to the pterin-4-alpha-carbinolamine dehydratase family.

The catalysed reaction is (4aS,6R)-4a-hydroxy-L-erythro-5,6,7,8-tetrahydrobiopterin = (6R)-L-erythro-6,7-dihydrobiopterin + H2O. This chain is Putative pterin-4-alpha-carbinolamine dehydratase, found in Mycobacterium sp. (strain JLS).